The sequence spans 150 residues: D-aminoacyl-tRNA deacylase (150 aa).

The short motif at 133-134 (GP) is the Gly-cisPro motif, important for rejection of L-amino acids element.

It belongs to the DTD family. Homodimer.

The protein resides in the cytoplasm. It carries out the reaction glycyl-tRNA(Ala) + H2O = tRNA(Ala) + glycine + H(+). The catalysed reaction is a D-aminoacyl-tRNA + H2O = a tRNA + a D-alpha-amino acid + H(+). An aminoacyl-tRNA editing enzyme that deacylates mischarged D-aminoacyl-tRNAs. Also deacylates mischarged glycyl-tRNA(Ala), protecting cells against glycine mischarging by AlaRS. Acts via tRNA-based rather than protein-based catalysis; rejects L-amino acids rather than detecting D-amino acids in the active site. By recycling D-aminoacyl-tRNA to D-amino acids and free tRNA molecules, this enzyme counteracts the toxicity associated with the formation of D-aminoacyl-tRNA entities in vivo and helps enforce protein L-homochirality. The sequence is that of D-aminoacyl-tRNA deacylase from Micrococcus luteus (strain ATCC 4698 / DSM 20030 / JCM 1464 / CCM 169 / CCUG 5858 / IAM 1056 / NBRC 3333 / NCIMB 9278 / NCTC 2665 / VKM Ac-2230) (Micrococcus lysodeikticus).